Reading from the N-terminus, the 77-residue chain is Acyl carrier protein (77 aa).

The Carrier domain maps to 2–77 (SSIEERVNKI…SAVDYIKAHS (76 aa)). Residue Ser-37 is modified to O-(pantetheine 4'-phosphoryl)serine.

The protein belongs to the acyl carrier protein (ACP) family. Post-translationally, 4'-phosphopantetheine is transferred from CoA to a specific serine of apo-ACP by AcpS. This modification is essential for activity because fatty acids are bound in thioester linkage to the sulfhydryl of the prosthetic group.

The protein resides in the cytoplasm. It participates in lipid metabolism; fatty acid biosynthesis. Carrier of the growing fatty acid chain in fatty acid biosynthesis. This chain is Acyl carrier protein, found in Alcanivorax borkumensis (strain ATCC 700651 / DSM 11573 / NCIMB 13689 / SK2).